The primary structure comprises 276 residues: Ribosomal RNA large subunit methyltransferase E (276 aa).

The S-adenosyl-L-methionine site is built by Gly52, Phe54, Asp72, Asp90, and Asp114. The active-site Proton acceptor is the Lys154. The span at 203–249 (RAAPTANATPTPTSTSTSTPTSTSTPTSTSTSTPAPTLTQTQTQTPK) shows a compositional bias: low complexity. A disordered region spans residues 203 to 276 (RAAPTANATP…AKTGASRRTR (74 aa)). The span at 265 to 276 (AKAKTGASRRTR) shows a compositional bias: basic residues.

The protein belongs to the class I-like SAM-binding methyltransferase superfamily. RNA methyltransferase RlmE family.

The protein localises to the cytoplasm. It catalyses the reaction uridine(2552) in 23S rRNA + S-adenosyl-L-methionine = 2'-O-methyluridine(2552) in 23S rRNA + S-adenosyl-L-homocysteine + H(+). Functionally, specifically methylates the uridine in position 2552 of 23S rRNA at the 2'-O position of the ribose in the fully assembled 50S ribosomal subunit. This Anaeromyxobacter sp. (strain Fw109-5) protein is Ribosomal RNA large subunit methyltransferase E.